Here is a 158-residue protein sequence, read N- to C-terminus: MAAQGVGPGPGSAAPPGLEAARQKLALRRKKVLSTEEMELYELAQAAGGGIDPDVFKILVDLLKLNVAPLAVFQMLKSMCAGQRLASEPQDPAAVSLPTSSVPETRGRDKGSAALGGVLALAERSNHEGSSQRMPRQPSATRLPKGGGPGKSPTQGST.

Ser34 is modified (phosphoserine). The segment at 84–158 (RLASEPQDPA…PGKSPTQGST (75 aa)) is disordered. Positions 112–122 (SAALGGVLALA) are enriched in low complexity. Positions 128–140 (EGSSQRMPRQPSA) are enriched in polar residues. Ser152 bears the Phosphoserine mark.

This sequence belongs to the MOZART2 family. Associates with the gamma-tubulin ring complex (gTuRC) consisting of TUBGCP2, TUBGCP3, TUBGCP4, TUBGCP5 and TUBGCP6 and gamma-tubulin TUBG1 or TUBG2; within the complex, interacts with TUBGCP2; the interaction plays a role in gTuRC activation.

Its subcellular location is the cytoplasm. It localises to the cytoskeleton. It is found in the microtubule organizing center. The protein resides in the centrosome. The protein localises to the spindle. Functionally, required for the recruitment and the assembly of the gamma-tubulin ring complex (gTuRC) at the centrosome. The gTuRC regulates the minus-end nucleation of alpha-beta tubulin heterodimers that grow into microtubule protafilaments, a critical step in centrosome duplication and spindle formation. The sequence is that of Mitotic-spindle organizing protein 2A (MZT2A) from Homo sapiens (Human).